A 348-amino-acid chain; its full sequence is Lipopolysaccharide heptosyltransferase 2 (348 aa).

It belongs to the glycosyltransferase 9 family.

The enzyme catalyses an L-alpha-D-Hep-(1-&gt;5)-[alpha-Kdo-(2-&gt;4)]-alpha-Kdo-(2-&gt;6)-lipid A + ADP-L-glycero-beta-D-manno-heptose = an L-alpha-D-Hep-(1-&gt;3)-L-alpha-D-Hep-(1-&gt;5)-[alpha-Kdo-(2-&gt;4)]-alpha-Kdo-(2-&gt;6)-lipid A + ADP + H(+). The catalysed reaction is L-alpha-D-Hep-(1-&gt;5)-[alpha-Kdo-(2-&gt;4)]-alpha-Kdo-(2-&gt;6)-lipid A (E. coli) + ADP-L-glycero-beta-D-manno-heptose = L-alpha-D-Hep-(1-&gt;3)-L-alpha-D-Hep-(1-&gt;5)-[alpha-Kdo-(2-&gt;4)]-alpha-Kdo-(2-&gt;6)-lipid A (E. coli) + ADP + H(+). The protein operates within bacterial outer membrane biogenesis; LPS core biosynthesis. Glycosyltransferase involved in the biosynthesis of the core oligosaccharide region of lipopolysaccharide (LPS). Catalyzes the addition of the second heptose unit to the heptosyl-Kdo2-lipid A module. The analog ADP-mannose can serve as an alternative donor in place of ADP-L-glycero-D-manno-heptose, but with lower efficiency. The polypeptide is Lipopolysaccharide heptosyltransferase 2 (Escherichia coli (strain K12)).